The sequence spans 274 residues: NH(3)-dependent NAD(+) synthetase (274 aa).

ATP is bound at residue 46–53; sequence GISGGQDS. D52 contacts Mg(2+). Deamido-NAD(+) is bound at residue R140. T160 provides a ligand contact to ATP. E165 lines the Mg(2+) pocket. The deamido-NAD(+) site is built by K173 and D180. ATP contacts are provided by K189 and T211. 260-261 serves as a coordination point for deamido-NAD(+); sequence HK.

This sequence belongs to the NAD synthetase family. As to quaternary structure, homodimer.

The enzyme catalyses deamido-NAD(+) + NH4(+) + ATP = AMP + diphosphate + NAD(+) + H(+). The protein operates within cofactor biosynthesis; NAD(+) biosynthesis; NAD(+) from deamido-NAD(+) (ammonia route): step 1/1. Catalyzes the ATP-dependent amidation of deamido-NAD to form NAD. Uses ammonia as a nitrogen source. This Sodalis glossinidius (strain morsitans) protein is NH(3)-dependent NAD(+) synthetase.